The sequence spans 257 residues: 5-oxoprolinase subunit A (257 aa).

Belongs to the LamB/PxpA family. Forms a complex composed of PxpA, PxpB and PxpC.

The enzyme catalyses 5-oxo-L-proline + ATP + 2 H2O = L-glutamate + ADP + phosphate + H(+). Its function is as follows. Catalyzes the cleavage of 5-oxoproline to form L-glutamate coupled to the hydrolysis of ATP to ADP and inorganic phosphate. In Natranaerobius thermophilus (strain ATCC BAA-1301 / DSM 18059 / JW/NM-WN-LF), this protein is 5-oxoprolinase subunit A.